A 798-amino-acid polypeptide reads, in one-letter code: Penicillin-binding protein 1A (798 aa).

The Cytoplasmic segment spans residues 2-9 (IKKILTTC). Residues 10-30 (FGLFFGFCVFGVGLVAIAILV) form a helical; Signal-anchor for type II membrane protein membrane-spanning segment. Residues 31–798 (TYPKLPSLDS…SKQQQLDSLF (768 aa)) are Periplasmic-facing. A transglycosylase region spans residues 50 to 218 (LTIYSADGEV…SAYNPIVNPE (169 aa)). Catalysis depends on Glu88, which acts as the Proton donor; for transglycosylase activity. Residues 378 to 700 (RRALGFAARA…GTIAVPVWVD (323 aa)) form a transpeptidase region. The Acyl-ester intermediate; for transpeptidase activity role is filled by Ser461. The interval 739–798 (LMLDNSGIAPQPSRRAKEDDEAAVENEQQGRSDETRQDVQETPVLPSNTDSKQQQLDSLF) is disordered. Residues 766–777 (QQGRSDETRQDV) show a composition bias toward basic and acidic residues. Polar residues predominate over residues 783–798 (LPSNTDSKQQQLDSLF).

The protein in the N-terminal section; belongs to the glycosyltransferase 51 family. This sequence in the C-terminal section; belongs to the transpeptidase family.

Its subcellular location is the cell inner membrane. It carries out the reaction [GlcNAc-(1-&gt;4)-Mur2Ac(oyl-L-Ala-gamma-D-Glu-L-Lys-D-Ala-D-Ala)](n)-di-trans,octa-cis-undecaprenyl diphosphate + beta-D-GlcNAc-(1-&gt;4)-Mur2Ac(oyl-L-Ala-gamma-D-Glu-L-Lys-D-Ala-D-Ala)-di-trans,octa-cis-undecaprenyl diphosphate = [GlcNAc-(1-&gt;4)-Mur2Ac(oyl-L-Ala-gamma-D-Glu-L-Lys-D-Ala-D-Ala)](n+1)-di-trans,octa-cis-undecaprenyl diphosphate + di-trans,octa-cis-undecaprenyl diphosphate + H(+). It catalyses the reaction Preferential cleavage: (Ac)2-L-Lys-D-Ala-|-D-Ala. Also transpeptidation of peptidyl-alanyl moieties that are N-acyl substituents of D-alanine.. Its pathway is cell wall biogenesis; peptidoglycan biosynthesis. In terms of biological role, cell wall formation. Synthesis of cross-linked peptidoglycan from the lipid intermediates. The enzyme has a penicillin-insensitive transglycosylase N-terminal domain (formation of linear glycan strands) and a penicillin-sensitive transpeptidase C-terminal domain (cross-linking of the peptide subunits). Essential for cell wall synthesis. The sequence is that of Penicillin-binding protein 1A (mrcA) from Neisseria gonorrhoeae (strain ATCC 700825 / FA 1090).